The primary structure comprises 389 residues: Fructose-1,6-bisphosphate aldolase/phosphatase (389 aa).

Asp-17 (proton acceptor; for FBP phosphatase activity) is an active-site residue. Asp-17, His-24, Asp-57, and Asp-58 together coordinate Mg(2+). His-24 lines the beta-D-fructose 1,6-bisphosphate pocket. Dihydroxyacetone phosphate is bound at residue His-24. Tyr-95 is a binding site for beta-D-fructose 1,6-bisphosphate. Mg(2+) is bound at residue Gln-99. 108–109 (GN) provides a ligand contact to beta-D-fructose 1,6-bisphosphate. Asp-136 serves as a coordination point for Mg(2+). Position 137 (Lys-137) interacts with beta-D-fructose 1,6-bisphosphate. Lys-137 provides a ligand contact to dihydroxyacetone phosphate. The active-site Proton donor/acceptor; for FBP aldolase activity is the Tyr-233. Lys-236, Asp-237, and Asp-238 together coordinate Mg(2+). Lys-236 functions as the Schiff-base intermediate with DHAP; for FBP aldolase activity in the catalytic mechanism. Beta-D-fructose 1,6-bisphosphate-binding positions include 246-247 (QS), Arg-270, Asp-291, and Tyr-352. Positions 270 and 291 each coordinate dihydroxyacetone phosphate.

It belongs to the FBP aldolase/phosphatase family. Homooctamer; dimer of tetramers. Requires Mg(2+) as cofactor.

The catalysed reaction is beta-D-fructose 1,6-bisphosphate + H2O = beta-D-fructose 6-phosphate + phosphate. It carries out the reaction beta-D-fructose 1,6-bisphosphate = D-glyceraldehyde 3-phosphate + dihydroxyacetone phosphate. It participates in carbohydrate biosynthesis; gluconeogenesis. In terms of biological role, catalyzes two subsequent steps in gluconeogenesis: the aldol condensation of dihydroxyacetone phosphate (DHAP) and glyceraldehyde-3-phosphate (GA3P) to fructose-1,6-bisphosphate (FBP), and the dephosphorylation of FBP to fructose-6-phosphate (F6P). The protein is Fructose-1,6-bisphosphate aldolase/phosphatase of Methanocaldococcus jannaschii (strain ATCC 43067 / DSM 2661 / JAL-1 / JCM 10045 / NBRC 100440) (Methanococcus jannaschii).